The sequence spans 170 residues: Adenine phosphoribosyltransferase (170 aa).

It belongs to the purine/pyrimidine phosphoribosyltransferase family. Homodimer.

It localises to the cytoplasm. The catalysed reaction is AMP + diphosphate = 5-phospho-alpha-D-ribose 1-diphosphate + adenine. The protein operates within purine metabolism; AMP biosynthesis via salvage pathway; AMP from adenine: step 1/1. Its function is as follows. Catalyzes a salvage reaction resulting in the formation of AMP, that is energically less costly than de novo synthesis. In Lysinibacillus sphaericus (strain C3-41), this protein is Adenine phosphoribosyltransferase.